We begin with the raw amino-acid sequence, 210 residues long: Adenylate kinase (210 aa).

10 to 15 contacts ATP; that stretch reads GSGKGT. Residues 28 to 57 form an NMP region; the sequence is SVGKVLRTVMESNTAEADVVKKFIKSGKLV. AMP is bound by residues Arg-34, 55-57, 83-86, and Gln-90; these read KLV and GYPR. An LID region spans residues 120–158; it reads GRISCTDCGTIYNKLYCMPKINGVCDICNSSSFQNRVDD. Residue Arg-121 coordinates ATP. Residues Cys-124 and Cys-127 each contribute to the Zn(2+) site. Residue 130-131 coordinates ATP; it reads IY. Cys-144 and Cys-147 together coordinate Zn(2+). Arg-155 and Arg-166 together coordinate AMP. Residue Gln-194 coordinates ATP.

Belongs to the adenylate kinase family. In terms of assembly, monomer.

It is found in the cytoplasm. It catalyses the reaction AMP + ATP = 2 ADP. It participates in purine metabolism; AMP biosynthesis via salvage pathway; AMP from ADP: step 1/1. Its function is as follows. Catalyzes the reversible transfer of the terminal phosphate group between ATP and AMP. Plays an important role in cellular energy homeostasis and in adenine nucleotide metabolism. This Orientia tsutsugamushi (strain Boryong) (Rickettsia tsutsugamushi) protein is Adenylate kinase.